Reading from the N-terminus, the 54-residue chain is Large ribosomal subunit protein bL33 (54 aa).

This sequence belongs to the bacterial ribosomal protein bL33 family.

This Elusimicrobium minutum (strain Pei191) protein is Large ribosomal subunit protein bL33.